A 601-amino-acid polypeptide reads, in one-letter code: Elongation factor 4 (601 aa).

In terms of domain architecture, tr-type G spans 6 to 188 (KFTRNFSIIA…AICYLLPPPV (183 aa)). Residues 18 to 23 (DHGKST) and 135 to 138 (NKID) each bind GTP.

Belongs to the TRAFAC class translation factor GTPase superfamily. Classic translation factor GTPase family. LepA subfamily.

The protein localises to the cell inner membrane. It catalyses the reaction GTP + H2O = GDP + phosphate + H(+). Functionally, required for accurate and efficient protein synthesis under certain stress conditions. May act as a fidelity factor of the translation reaction, by catalyzing a one-codon backward translocation of tRNAs on improperly translocated ribosomes. Back-translocation proceeds from a post-translocation (POST) complex to a pre-translocation (PRE) complex, thus giving elongation factor G a second chance to translocate the tRNAs correctly. Binds to ribosomes in a GTP-dependent manner. This is Elongation factor 4 from Leptospira biflexa serovar Patoc (strain Patoc 1 / Ames).